Reading from the N-terminus, the 265-residue chain is HTH-type transcriptional activator CfaD (265 aa).

An HTH araC/xylS-type domain is found at 164 to 261 (DKVRNVIEKD…GVTPKQFFTY (98 aa)). DNA-binding regions (H-T-H motif) lie at residues 181–202 (GIIA…ESEN) and 228–251 (ISQI…NKHY).

In terms of assembly, homodimer.

In terms of biological role, transcriptional activator of the CFA/I adhesin (cfaA and cfaB) genes of enterotoxigenic E.coli at 37 degrees Celsius. Also represses the silencing effect of H-NS (hns). The sequence is that of HTH-type transcriptional activator CfaD from Escherichia coli.